Reading from the N-terminus, the 1055-residue chain is DIS3-like exonuclease 2 (1055 aa).

2 disordered regions span residues 1–109 and 229–249; these read MKSA…SSPE and SAAK…KARQ. A compositionally biased stretch (basic residues) spans 17-32; sequence HKKKRNRPQKQNRRSK. Basic and acidic residues predominate over residues 39–59; it reads EDAHVEESLDGRDSSRSKAKD. The segment covering 97 to 108 has biased composition (low complexity); the sequence is PRRSASPLLSSP. Residues aspartate 488 and aspartate 497 each contribute to the Mg(2+) site.

Belongs to the RNR ribonuclease family. DIS3L2 subfamily. Mg(2+) is required as a cofactor. Requires Mn(2+) as cofactor. In terms of tissue distribution, widely expressed.

The protein resides in the cytoplasm. Its subcellular location is the P-body. Functionally, 3'-5'-exoribonuclease that specifically recognizes RNAs polyuridylated at their 3' end and mediates their degradation. Component of an exosome-independent RNA degradation pathway that mediates degradation of cytoplasmic mRNAs that have been deadenylated and subsequently uridylated at their 3'. The protein is DIS3-like exonuclease 2 (SOV) of Arabidopsis thaliana (Mouse-ear cress).